The chain runs to 139 residues: Interleukin-5 (139 aa).

Residues 1–19 (MMKILVCLPLLTLYAGCVY) form the signal peptide. 3 N-linked (GlcNAc...) asparagine glycosylation sites follow: N48, N77, and N91.

It belongs to the IL-5 family. As to quaternary structure, homodimer; disulfide-linked. Interacts with IL5RA. Interacts with CSF2RB.

The protein localises to the secreted. Its function is as follows. Homodimeric cytokine expressed predominantly by T-lymphocytes and NK cells that plays an important role in the survival, differentiation, and chemotaxis of eosinophils. Also acts on activated and resting B-cells to induce immunoglobulin production, growth, and differentiation. Mechanistically, exerts its biological effects through a receptor composed of IL5RA subunit and the cytokine receptor common subunit beta/CSF2RB. Binding to the receptor leads to activation of various kinases including LYN, SYK and JAK2 and thereby propagates signals through the RAS-MAPK and JAK-STAT5 pathways respectively. The polypeptide is Interleukin-5 (IL5) (Notamacropus eugenii (Tammar wallaby)).